The following is a 1218-amino-acid chain: Cytosolic carboxypeptidase 1 (1218 aa).

Disordered regions lie at residues 476–512 and 590–617; these read VVMK…RVAP and TEDD…PTLH. Over residues 477–499 the composition is skewed to basic and acidic residues; the sequence is VMKERASPKGEEAKEDPKGHDRT. The Peptidase M14 domain occupies 840–1130; that stretch reads YPYTYSTLQM…KFCVGLLRLK (291 aa). 3 residues coordinate Zn(2+): His-912, Glu-915, and His-1009. Glu-1094 acts as the Proton donor/acceptor in catalysis. A Phosphoserine modification is found at Ser-1160. Residues 1193–1218 form a disordered region; that stretch reads ENTGDYEPSAQEEALSDSEVSRTHLI.

It belongs to the peptidase M14 family. In terms of assembly, interacts with MYLK. It depends on Zn(2+) as a cofactor. Widely expressed. Highly expressed in the cerebellum and cortex of adult mouse brain. Expressed at similar levels in both the cerebellum and the cortex throughout all developmental stages. Also expressed in sciatic nerve transection, spinal motor neurons undergoing axon regeneration, testis, heart, eye, lung, pancreas, intestine, stomach, pituitary, spleen, adrenal, kidney and in developing brain. Expression in cranial motor nuclei is the same as that observed in uninjured primary motor neurons. Expression is prevalent in sensory neurons and hippocampal CA3 neurons in addition to regenerating motor neurons.

It is found in the cytoplasm. The protein localises to the cytosol. It localises to the nucleus. Its subcellular location is the mitochondrion. It carries out the reaction (L-glutamyl)(n+1)-gamma-L-glutamyl-L-glutamyl-[protein] + H2O = (L-glutamyl)(n)-gamma-L-glutamyl-L-glutamyl-[protein] + L-glutamate. The enzyme catalyses C-terminal L-alpha-aminoacyl-L-glutamyl-L-glutamyl-[tubulin] + H2O = C-terminal L-alpha-aminoacyl-L-glutamyl-[tubulin] + L-glutamate. In terms of biological role, metallocarboxypeptidase that mediates protein deglutamylation of tubulin and non-tubulin target proteins. Catalyzes the removal of polyglutamate side chains present on the gamma-carboxyl group of glutamate residues within the C-terminal tail of alpha- and beta-tubulin. Specifically cleaves tubulin long-side-chains, while it is not able to remove the branching point glutamate. Also catalyzes the removal of polyglutamate residues from the carboxy-terminus of alpha-tubulin as well as non-tubulin proteins such as MYLK. Involved in KLF4 deglutamylation which promotes KLF4 proteasome-mediated degradation, thereby negatively regulating cell pluripotency maintenance and embryogenesis. This Mus musculus (Mouse) protein is Cytosolic carboxypeptidase 1.